The primary structure comprises 230 residues: uncharacterized protein (230 aa).

Polar residues predominate over residues 1 to 11; the sequence is MPVPSVTVTTD. The segment at 1-88 is disordered; the sequence is MPVPSVTVTT…TLKRPTSNSI (88 aa). Residues 63 to 73 are compositionally biased toward basic and acidic residues; the sequence is DDQHRHSDVHS. Over residues 79–88 the composition is skewed to polar residues; it reads TLKRPTSNSI. Serine 106 bears the Phosphoserine mark. Basic and acidic residues predominate over residues 156 to 179; sequence LKREDSRVSSTKKEHINDHTDMHS. Positions 156 to 203 are disordered; the sequence is LKREDSRVSSTKKEHINDHTDMHSTRSKVTTNSQGSSLEPNKLNMAVE. Positions 182–194 are enriched in polar residues; sequence SKVTTNSQGSSLE.

This is an uncharacterized protein from Saccharomyces cerevisiae (strain ATCC 204508 / S288c) (Baker's yeast).